A 207-amino-acid polypeptide reads, in one-letter code: Large ribosomal subunit protein uL4 (207 aa).

The interval histidine 49–serine 77 is disordered. The span at glycine 60–glycine 71 shows a compositional bias: basic residues.

This sequence belongs to the universal ribosomal protein uL4 family. In terms of assembly, part of the 50S ribosomal subunit.

Functionally, one of the primary rRNA binding proteins, this protein initially binds near the 5'-end of the 23S rRNA. It is important during the early stages of 50S assembly. It makes multiple contacts with different domains of the 23S rRNA in the assembled 50S subunit and ribosome. Forms part of the polypeptide exit tunnel. The polypeptide is Large ribosomal subunit protein uL4 (Levilactobacillus brevis (strain ATCC 367 / BCRC 12310 / CIP 105137 / JCM 1170 / LMG 11437 / NCIMB 947 / NCTC 947) (Lactobacillus brevis)).